A 261-amino-acid polypeptide reads, in one-letter code: Putative [LysW]-aminoadipate/[LysW]-glutamate kinase (261 aa).

Substrate is bound by residues 35–36 (GG), R62, and N162.

The protein belongs to the acetylglutamate kinase family. LysZ subfamily.

Its subcellular location is the cytoplasm. It carries out the reaction [amino-group carrier protein]-C-terminal-N-(1,4-dicarboxybutan-1-yl)-L-glutamine + ATP = [amino-group carrier protein]-C-terminal-N-(1-carboxy-5-phosphooxy-5-oxopentan-1-yl)-L-glutamine + ADP. The enzyme catalyses [amino-group carrier protein]-C-terminal-gamma-(L-glutamyl)-L-glutamate + ATP = [amino-group carrier protein]-C-terminal-gamma-(5-phospho-L-glutamyl)-L-glutamate + ADP. It functions in the pathway amino-acid biosynthesis; L-lysine biosynthesis via AAA pathway; L-lysine from L-alpha-aminoadipate (Thermus route): step 2/5. The protein operates within amino-acid biosynthesis; L-arginine biosynthesis. Functionally, involved in both the arginine and lysine biosynthetic pathways. Phosphorylates the LysW-bound precursors glutamate (for arginine biosynthesis), respectively alpha-aminoadipate (for lysine biosynthesis). The protein is Putative [LysW]-aminoadipate/[LysW]-glutamate kinase of Pyrobaculum calidifontis (strain DSM 21063 / JCM 11548 / VA1).